We begin with the raw amino-acid sequence, 117 residues long: MSKAPSQPAKKWMSARTLAKSEDATNRKSNTAAPASQPSQQPASVMHERPTPPPPAPVQLPQSVFFERQEAVDTLSNLYRNAQSVKKIETGPAAFEARDISKVHEELMDCLRPAAAA.

A disordered region spans residues 1–60 (MSKAPSQPAKKWMSARTLAKSEDATNRKSNTAAPASQPSQQPASVMHERPTPPPPAPVQL). Over residues 32–44 (AAPASQPSQQPAS) the composition is skewed to low complexity.

Forms a complex composed of at least MKT1, PBP1, XAC1 and LSM12. Forms a complex composed of at least MKT1L, PBP1, XAC1 and LSM12.

The protein resides in the cytoplasm. Its function is as follows. Involved in post-transcriptional regulation of gene expression. This chain is PBP1-interacting protein XAC1, found in Trypanosoma brucei brucei (strain 927/4 GUTat10.1).